Consider the following 460-residue polypeptide: Probable carboxypeptidase ARB_01041 (460 aa).

Positions 1–22 (MQKTYIWALVSLLASSLVDARS) are cleaved as a signal peptide. N-linked (GlcNAc...) asparagine glycosylation occurs at N98. Zn(2+) is bound at residue D175. Catalysis depends on E207, which acts as the Proton acceptor. E208 is a binding site for Zn(2+). N395 carries an N-linked (GlcNAc...) asparagine glycan.

This sequence belongs to the peptidase M20A family. Zn(2+) is required as a cofactor.

It localises to the secreted. The polypeptide is Probable carboxypeptidase ARB_01041 (Arthroderma benhamiae (strain ATCC MYA-4681 / CBS 112371) (Trichophyton mentagrophytes)).